The following is a 691-amino-acid chain: Dipeptidyl peptidase 3 (691 aa).

Histidine 431 serves as a coordination point for Zn(2+). Residue glutamate 432 is part of the active site. Histidine 436 and glutamate 492 together coordinate Zn(2+).

This sequence belongs to the peptidase M49 family. The cofactor is Zn(2+).

It is found in the cytoplasm. It carries out the reaction Release of an N-terminal dipeptide from a peptide comprising four or more residues, with broad specificity. Also acts on dipeptidyl 2-naphthylamides.. This Dictyostelium discoideum (Social amoeba) protein is Dipeptidyl peptidase 3 (dpp3-1).